Consider the following 862-residue polypeptide: Phosphatidic acid phosphohydrolase 1 (862 aa).

The segment at 19-104 (NPATLSGAID…VPDELLVSPV (86 aa)) is N-LIP. Disordered regions lie at residues 104–183 (VMSA…SVEE) and 300–341 (GSTL…AGSG). Positions 105–117 (MSATSSPPQSPET) are enriched in polar residues. 2 positions are modified to phosphoserine: Ser-110 and Ser-114. Basic and acidic residues predominate over residues 132–143 (NENKKKEKKVLE). Composition is skewed to low complexity over residues 161 to 179 (SETTGSLSPTESSTTTPPD) and 300 to 313 (GSTLNSLSSSPSGS). Ser-168 carries the post-translational modification Phosphoserine. Residues 398-402 (DIDGT) carry the DXDXT motif motif. Lys-496 is subject to N6-acetyllysine. Ser-511 carries the post-translational modification Phosphoserine. Position 602 is a phosphoserine; by CDC28 (Ser-602). A disordered region spans residues 648–732 (SDISNDDSDN…TPNKSTMSKG (85 aa)). Over residues 651–663 (SNDDSDNIDEDTD) the composition is skewed to acidic residues. Polar residues-rich tracts occupy residues 664-679 (VSQQSNISRNRANSVK) and 687-699 (PQRNVSGSTNNNE). Residues 710 to 730 (ASDLVSSHSSSGSTPNKSTMS) show a composition bias toward low complexity. Thr-723 is modified (phosphothreonine; by CDC28). Ser-744 is subject to Phosphoserine; by CDC28. Residues Ser-748, Ser-773, and Ser-774 each carry the phosphoserine modification. The tract at residues 757 to 780 (MDDEDSNYNRTKSRRASSAAATSI) is disordered. Lys-801 is subject to N6-acetyllysine. Positions 807–862 (DVHSLGNSDTESRREQSVNETGRNQLPHNSMDDKDLDSRVSDEFDDDEFDEDEFED) are disordered. Phosphoserine is present on residues Ser-810 and Ser-814. Phosphothreonine is present on Thr-816. Polar residues predominate over residues 824-834 (VNETGRNQLPH). Residues 836-848 (SMDDKDLDSRVSD) show a composition bias toward basic and acidic residues. Phosphoserine is present on residues Ser-844 and Ser-847. Acidic residues predominate over residues 849–862 (EFDDDEFDEDEFED).

The protein belongs to the lipin family. Requires Mg(2+) as cofactor. Post-translationally, acetylation at Lys-496 and Lys-801 by ESA1 promotes synthesis of diacylglycerol. In terms of processing, phosphorylated by CDC28 at the onset of mitosis, and dephosphorylated by the NEM1-SPO7 complex. Phosphorylation regulates recruitment on promoters of lipid biosynthetic enzymes.

It localises to the cytoplasm. Its subcellular location is the nucleus membrane. It is found in the endoplasmic reticulum membrane. It catalyses the reaction a 1,2-diacyl-sn-glycero-3-phosphate + H2O = a 1,2-diacyl-sn-glycerol + phosphate. Its activity is regulated as follows. Phenylglyoxal and propranolol inhibit activity in dose-dependent manners with IC(50) values of 1.3 mM and 0.2 mM, respectively. Sertraline inhibits activity in a dose-dependent manner with an IC(50) value of 85 uM; the inhibitory effects of sertraline and propranolol are additive. Mg(2+)-dependent phosphatidate (PA) phosphatase which catalyzes the dephosphorylation of PA to yield diacylglycerol. Required for de novo lipid synthesis and formation of lipid droplets. Controls transcription of phospholipid biosynthetic genes and nuclear structure by regulating the amount of membrane present at the nuclear envelope. Involved in plasmid maintenance, in respiration and in cell proliferation. The chain is Phosphatidic acid phosphohydrolase 1 (PAH1) from Saccharomyces cerevisiae (strain ATCC 204508 / S288c) (Baker's yeast).